The sequence spans 381 residues: Probable cyclic AMP-AMP-GMP nucleotide synthase (381 aa).

Residues S53 and R56 each contribute to the GTP site. Catalysis depends on residues D69 and D71. Mg(2+) is bound by residues D69 and D71. R109 serves as a coordination point for GTP. Residue D121 is part of the active site. Mg(2+) contacts are provided by D121 and D196. The GTP site is built by R197, R204, T205, Q210, and R307. The disordered stretch occupies residues 348–381 (GTKFPFPGPQGGDRSGGFTAPTQPAEPQKTGRFA).

The protein belongs to the CD-NTase family. D02 subfamily. Mg(2+) is required as a cofactor.

It carries out the reaction GTP + 2 ATP = 3',3',3'-cAAG + 3 diphosphate. Functionally, cyclic nucleotide synthase (second messenger synthase) of a CBASS antivirus system. CBASS (cyclic oligonucleotide-based antiphage signaling system) provides immunity against bacteriophage. The CD-NTase protein synthesizes cyclic nucleotides in response to infection; these serve as specific second messenger signals. The signals activate a diverse range of effectors, leading to bacterial cell death and thus abortive phage infection. In terms of biological role, cyclic nucleotide synthase, synthesizes a tricyclic nucleotide with AMP and GMP moieties, probably 3',3',3'-cyclic AMP-AMP-GMP (3'3'3'-cAAG). Controls the activity of the associated CBASS effector protein. This chain is Probable cyclic AMP-AMP-GMP nucleotide synthase, found in Salmonella paratyphi B (Salmonella enterica subsp. enterica serovar Paratyphi B).